A 213-amino-acid chain; its full sequence is Large ribosomal subunit protein bL25 (213 aa).

The span at 191–207 shows a compositional bias: low complexity; sequence AEPTDAPTAPAAAPGAE. Positions 191–213 are disordered; it reads AEPTDAPTAPAAAPGAEAPKDKA.

It belongs to the bacterial ribosomal protein bL25 family. CTC subfamily. In terms of assembly, part of the 50S ribosomal subunit; part of the 5S rRNA/L5/L18/L25 subcomplex. Contacts the 5S rRNA. Binds to the 5S rRNA independently of L5 and L18.

This is one of the proteins that binds to the 5S RNA in the ribosome where it forms part of the central protuberance. This is Large ribosomal subunit protein bL25 from Polynucleobacter asymbioticus (strain DSM 18221 / CIP 109841 / QLW-P1DMWA-1) (Polynucleobacter necessarius subsp. asymbioticus).